The primary structure comprises 20 residues: Luminal-binding protein (20 aa).

Belongs to the heat shock protein 70 family.

The protein localises to the endoplasmic reticulum lumen. Probably plays a role in facilitating the assembly of multimeric protein complexes inside the ER. This Phaseolus vulgaris (Kidney bean) protein is Luminal-binding protein.